The sequence spans 151 residues: Small ribosomal subunit protein uS15 (151 aa).

The tract at residues 1–20 (MARLHSGKRGSSGSTRPLRT) is disordered.

The protein belongs to the universal ribosomal protein uS15 family. As to quaternary structure, part of the 30S ribosomal subunit.

In Methanococcus maripaludis (strain DSM 14266 / JCM 13030 / NBRC 101832 / S2 / LL), this protein is Small ribosomal subunit protein uS15.